Reading from the N-terminus, the 448-residue chain is Putative flavin-containing monooxygenase FMO GS-OX-like 10 (448 aa).

An FAD-binding site is contributed by 18 to 23 (GAGAAG). Position 212–217 (212–217 (GSSVSG)) interacts with NADP(+).

Belongs to the FMO family. FAD serves as cofactor.

Catalyzes the conversion of methylthioalkyl glucosinolates of any chain length into methylsulfinylalkyl glucosinolates. The protein is Putative flavin-containing monooxygenase FMO GS-OX-like 10 of Arabidopsis thaliana (Mouse-ear cress).